We begin with the raw amino-acid sequence, 430 residues long: Vitamin B6 salvage pathway transcriptional repressor PtsJ (430 aa).

Residues 4-72 (GKTANEIFDS…GRNGTVIKGS (69 aa)) form the HTH gntR-type domain. The segment at residues 32-51 (VRELASELKVNRNTVAAAYK) is a DNA-binding region (H-T-H motif). The disordered stretch occupies residues 70-95 (KGSPSPVALEGGDPHTPLHDLSGGNP). N6-(pyridoxal phosphate)lysine is present on Lys-282.

It in the C-terminal section; belongs to the class-I pyridoxal-phosphate-dependent aminotransferase family. As to quaternary structure, homodimer in both apo- and holo-forms.

Its function is as follows. Acts as a transcriptional repressor of the pdxK gene, encoding a pyridoxal kinase involved in the vitamin B6 salvage pathway. Also represses transcription of its own gene. Binds to the ptsJ-pdxK intergenic region, but does not bind pdxY and pdxH promoters. Among all six B6 vitamers, only pyridoxal 5'-phosphate (PLP) clearly binds to the protein and acts as an effector molecule for PtsJ, inducing a protein conformational change that increases affinity for DNA. Thus, PLP stabilizes protein-DNA interactions, reinforcing repression. The sequence is that of Vitamin B6 salvage pathway transcriptional repressor PtsJ from Salmonella typhimurium (strain LT2 / SGSC1412 / ATCC 700720).